A 133-amino-acid chain; its full sequence is Ribosome-binding factor A (133 aa).

Belongs to the RbfA family. Monomer. Binds 30S ribosomal subunits, but not 50S ribosomal subunits or 70S ribosomes.

The protein resides in the cytoplasm. Functionally, one of several proteins that assist in the late maturation steps of the functional core of the 30S ribosomal subunit. Associates with free 30S ribosomal subunits (but not with 30S subunits that are part of 70S ribosomes or polysomes). Required for efficient processing of 16S rRNA. May interact with the 5'-terminal helix region of 16S rRNA. The sequence is that of Ribosome-binding factor A from Acinetobacter baylyi (strain ATCC 33305 / BD413 / ADP1).